We begin with the raw amino-acid sequence, 302 residues long: MNSLPLHLLDQILFRLEPKSLAMMKSTNRTINSHISDPLFESEYFSRLESSLYNLSPGGARYVMCQPLVSSCKSMSMGEKAIQGNFRCYMLGSCSGLLLLYIGGLFVANPLTKRFRYLDPSGSKFIPTLSGDRWIYLAHPERAMCVGFAVDRKRFKIVCILEMETRYEFEINDGDSWRLSKTTINADSKSDLTKWMKPVYLEGTLHWLRNDGSIIAFNPETEQARLIPSGFHQEVPDMKLLLAADDKINRLTLISGTKQTISVYTLLGNLKWGLARRIKNVSLKENELNAGTWLCTMASVFW.

Positions 1–48 (MNSLPLHLLDQILFRLEPKSLAMMKSTNRTINSHISDPLFESEYFSRL) constitute an F-box domain.

This Arabidopsis thaliana (Mouse-ear cress) protein is F-box protein At1g20360.